The chain runs to 208 residues: ATP-dependent Clp protease proteolytic subunit (208 aa).

The active-site Nucleophile is serine 106. Histidine 131 is a catalytic residue.

The protein belongs to the peptidase S14 family. Fourteen ClpP subunits assemble into 2 heptameric rings which stack back to back to give a disk-like structure with a central cavity, resembling the structure of eukaryotic proteasomes.

Its subcellular location is the cytoplasm. It catalyses the reaction Hydrolysis of proteins to small peptides in the presence of ATP and magnesium. alpha-casein is the usual test substrate. In the absence of ATP, only oligopeptides shorter than five residues are hydrolyzed (such as succinyl-Leu-Tyr-|-NHMec, and Leu-Tyr-Leu-|-Tyr-Trp, in which cleavage of the -Tyr-|-Leu- and -Tyr-|-Trp bonds also occurs).. Cleaves peptides in various proteins in a process that requires ATP hydrolysis. Has a chymotrypsin-like activity. Plays a major role in the degradation of misfolded proteins. The protein is ATP-dependent Clp protease proteolytic subunit of Roseobacter denitrificans (strain ATCC 33942 / OCh 114) (Erythrobacter sp. (strain OCh 114)).